Reading from the N-terminus, the 176-residue chain is Cathelicidin-2 (176 aa).

Residues 1 to 29 (METQRASLSLGRCSLWLLLLGLVLPSASA) form the signal peptide. Pyrrolidone carboxylic acid is present on glutamine 30. Positions 30 to 130 (QALSYREAVL…DINCNELQSV (101 aa)) are excised as a propeptide. Disulfide bonds link cysteine 85/cysteine 96 and cysteine 107/cysteine 124. The interval 157–176 (IFPPIRPPFRPPLGPFPGRR) is disordered. Proline amide is present on proline 173. Residues 174–176 (GRR) constitute a propeptide, removed in mature form.

The protein belongs to the cathelicidin family. In terms of processing, elastase is responsible for its maturation. As to expression, large granules of neutrophils.

Its subcellular location is the secreted. Functionally, exerts, in vitro, a potent antimicrobial activity. Probably due to an impairment of the function of the respiratory chain and of energy-dependent activities in the inner membrane of susceptible microorganisms. In Bos taurus (Bovine), this protein is Cathelicidin-2 (CATHL2).